The chain runs to 463 residues: NADH dehydrogenase [ubiquinone] iron-sulfur protein 2, mitochondrial (463 aa).

The transit peptide at 1 to 33 directs the protein to the mitochondrion; that stretch reads MAALRALCGFRGVAAQVLRPGAGVRLPIQPSRG. Lys62 bears the N6-acetyllysine mark. Position 118 is a symmetric dimethylarginine (Arg118). Residues Cys326, Cys332, and Cys347 each coordinate [4Fe-4S] cluster.

This sequence belongs to the complex I 49 kDa subunit family. In terms of assembly, core subunit of respiratory chain NADH dehydrogenase (Complex I) which is composed of 45 different subunits. Component of the iron-sulfur (IP) fragment of the enzyme. Interacts with NDUFAF3. Interacts with NDUFAF7. Interacts with CERS2. It depends on [4Fe-4S] cluster as a cofactor. Post-translationally, dimethylation at Arg-118 by NDUFAF7 takes place after NDUFS2 assembles into the complex I, leading to stabilize the early intermediate complex.

The protein resides in the mitochondrion inner membrane. The catalysed reaction is a ubiquinone + NADH + 5 H(+)(in) = a ubiquinol + NAD(+) + 4 H(+)(out). Its function is as follows. Core subunit of the mitochondrial membrane respiratory chain NADH dehydrogenase (Complex I) which catalyzes electron transfer from NADH through the respiratory chain, using ubiquinone as an electron acceptor. Essential for the catalytic activity of complex I. Essential for the assembly of complex I. Redox-sensitive, critical component of the oxygen-sensing pathway in the pulmonary vasculature which plays a key role in acute pulmonary oxygen-sensing and hypoxic pulmonary vasoconstriction. Plays an important role in carotid body sensing of hypoxia. Essential for glia-like neural stem and progenitor cell proliferation, differentiation and subsequent oligodendrocyte or neuronal maturation. The protein is NADH dehydrogenase [ubiquinone] iron-sulfur protein 2, mitochondrial (NDUFS2) of Homo sapiens (Human).